Consider the following 160-residue polypeptide: Bcl-2-like gene 16 protein (160 aa).

The short motif at 64–84 is the BH1 element; that stretch reads LLTTEHTTNWGKVVAMLSFSA.

It belongs to the Bcl-2 family.

The polypeptide is Bcl-2-like gene 16 protein (16) (Saimiri sciureus (Common squirrel monkey)).